A 173-amino-acid polypeptide reads, in one-letter code: Large ribosomal subunit protein uL10 (173 aa).

This sequence belongs to the universal ribosomal protein uL10 family. Part of the ribosomal stalk of the 50S ribosomal subunit. The N-terminus interacts with L11 and the large rRNA to form the base of the stalk. The C-terminus forms an elongated spine to which L12 dimers bind in a sequential fashion forming a multimeric L10(L12)X complex.

In terms of biological role, forms part of the ribosomal stalk, playing a central role in the interaction of the ribosome with GTP-bound translation factors. This is Large ribosomal subunit protein uL10 from Nitratidesulfovibrio vulgaris (strain ATCC 29579 / DSM 644 / CCUG 34227 / NCIMB 8303 / VKM B-1760 / Hildenborough) (Desulfovibrio vulgaris).